We begin with the raw amino-acid sequence, 311 residues long: Phosphoribosylamine--glycine ligase (311 aa).

Positions 1–191 (DPRVRKQYIQ…LVQVLLAACR (191 aa)) constitute an ATP-grasp domain.

The protein belongs to the GARS family.

It is found in the plastid. It localises to the chloroplast. The enzyme catalyses 5-phospho-beta-D-ribosylamine + glycine + ATP = N(1)-(5-phospho-beta-D-ribosyl)glycinamide + ADP + phosphate + H(+). The protein operates within purine metabolism; IMP biosynthesis via de novo pathway; N(1)-(5-phospho-D-ribosyl)glycinamide from 5-phospho-alpha-D-ribose 1-diphosphate: step 2/2. In Vigna unguiculata (Cowpea), this protein is Phosphoribosylamine--glycine ligase (PUR2).